A 72-amino-acid polypeptide reads, in one-letter code: Large ribosomal subunit protein bL31 (72 aa).

Residues Cys-16, Cys-18, Cys-36, and Cys-39 each coordinate Zn(2+).

This sequence belongs to the bacterial ribosomal protein bL31 family. Type A subfamily. In terms of assembly, part of the 50S ribosomal subunit. Zn(2+) serves as cofactor.

Functionally, binds the 23S rRNA. The sequence is that of Large ribosomal subunit protein bL31 from Geobacter sp. (strain M21).